Consider the following 243-residue polypeptide: Nuclear protein UL4 homolog (243 aa).

The tract at residues 193–226 (RPDDQTTPTPTPHQYTSQRRQPETNCPSPQPAFF) is disordered. A compositionally biased stretch (polar residues) spans 205 to 219 (HQYTSQRRQPETNCP).

The protein belongs to the alphaherpesvirinae HHV-1 UL4 family.

Its subcellular location is the host nucleus. In Varicella-zoster virus (strain Oka vaccine) (HHV-3), this protein is Nuclear protein UL4 homolog.